We begin with the raw amino-acid sequence, 66 residues long: Alpha-like toxin BeM9 (66 aa).

Positions 2-66 constitute an LCN-type CS-alpha/beta domain; sequence RDAYIAKPHN…VPIRIPGKCH (65 aa). Disulfide bonds link Cys-12-Cys-65, Cys-16-Cys-38, Cys-24-Cys-48, and Cys-28-Cys-50.

It belongs to the long (4 C-C) scorpion toxin superfamily. Sodium channel inhibitor family. Alpha subfamily. Expressed by the venom gland.

It is found in the secreted. Functionally, alpha toxins bind voltage-independently at site-3 of sodium channels (Nav) and inhibit the inactivation of the activated channels, thereby blocking neuronal transmission. This toxin is active on both mammals and insects, since it inhibits inactivation of rNav1.4/SCN4A, hNav1.5/SCN5A, mNav1.6/SCN8A and insect BgNav1 and DmNav1 channels. In vivo, it shows paralytic activity in mice. The sequence is that of Alpha-like toxin BeM9 from Mesobuthus eupeus (Lesser Asian scorpion).